A 68-amino-acid chain; its full sequence is DNA-directed RNA polymerase subunit omega (68 aa).

The protein belongs to the RNA polymerase subunit omega family. As to quaternary structure, the RNAP catalytic core consists of 2 alpha, 1 beta, 1 beta' and 1 omega subunit. When a sigma factor is associated with the core the holoenzyme is formed, which can initiate transcription.

The enzyme catalyses RNA(n) + a ribonucleoside 5'-triphosphate = RNA(n+1) + diphosphate. In terms of biological role, promotes RNA polymerase assembly. Latches the N- and C-terminal regions of the beta' subunit thereby facilitating its interaction with the beta and alpha subunits. This Desulfatibacillum aliphaticivorans protein is DNA-directed RNA polymerase subunit omega.